The chain runs to 219 residues: Transmembrane emp24 domain-containing protein 10 (219 aa).

The signal sequence occupies residues 1 to 31 (MSGLSGPPARRGPFPLALLLLFLLGPRLVLA). A required for interaction with STX17 region spans residues 1-142 (MSGLSGPPAR…KNYEEIAKVE (142 aa)). Topologically, residues 32–185 (ISFHLPINSR…RDTNESTNTR (154 aa)) are lumenal. The GOLD domain occupies 41–193 (RKCLREEIHK…TRVLYFSIFS (153 aa)). A required for TMED10 and TMED2 cis-Golgi network localization region spans residues 147–178 (LEVELRRLEDLSESIVNDFAYMKKREEEMRDT). Dimethylated arginine is present on residues R171 and R176. N179 is a glycosylation site (N-linked (GlcNAc...) asparagine). The chain crosses the membrane as a helical span at residues 186–206 (VLYFSIFSMFCLIGLATWQVF). Residues 204-219 (QVFYLRRFFKAKKLIE) are interaction with COPG1. Residues 207-219 (YLRRFFKAKKLIE) are Cytoplasmic-facing. Residues 207–219 (YLRRFFKAKKLIE) form an interaction with ARF1 and IL1B region. The short motif at 211 to 212 (FF) is the COPII vesicle coat-binding element. The short motif at 211-219 (FFKAKKLIE) is the COPI vesicle coat-binding element.

The protein belongs to the EMP24/GP25L family. As to quaternary structure, predominantly dimeric and to a lesser extent monomeric in the ER. Monomer and dimer in ERGIC and cis-Golgi network. Forms homooligomer (via GOLD domain); the assembly is promoted by direct binding with leaderless cargos and may form a protein channel that facilitates cargo entry into the ERGIC. Forms heterooligomeric complexes with other members of the p24 family such as TMED2, TMED7 and TMED9. Interacts (via GOLD domain) with TMED2 (via GOLD domain); the complex is required for export of TMED10 from the ER to the cis-Golgi network; the complex is proposed to be involved in cis-Golgi network dynamics and / or biogenesis. Associates with the COPI vesicle coat subunits (coatomer). Tetramerization of the cytoplasmic domain at the Golgi membrane in vitro; the complex is proposed to interact with COPI coatomer and induce budding of the vesicles. Interacts with COPG1; the interaction involves TMED10 homodimer. Interacts with ARF1 (GDP-bound); the interaction probably involves a TMED10 oligomer. Interacts with SEC23A, SEC24B, SEC24C and SEC24D components of the coat protein complex II/COPII, indicative of an association of TMED10 with the COPII vesicle coat. Interacts with CD59. Interacts with MPPE1/PGAP5; the complex might recruit and sort GPI-anchored proteins to the ER-exit site, or the interaction might lead to recycling of PGAP5 between the ER and the Golgi. Interacts with F2LR1/PAR2. Interacts with KDELR2/ERD2; the interaction is disrupted by KDELR2 ligand. Found in a complex composed at least of SURF4, TMED2 and TMED10. Associates with the presenilin-dependent gamma-secretase complex. Interacts with STX17; the interaction is direct. Interacts with IL-1; the interaction is direct. Interacts with RAB21 (active GTP-bound form); the interaction is indirect and regulates TMED10 abundance and localization at the Golgi.

It localises to the endoplasmic reticulum membrane. It is found in the endoplasmic reticulum-Golgi intermediate compartment membrane. The protein localises to the golgi apparatus membrane. The protein resides in the golgi apparatus. Its subcellular location is the cis-Golgi network membrane. It localises to the trans-Golgi network membrane. It is found in the cytoplasmic vesicle. The protein localises to the secretory vesicle membrane. The protein resides in the cell membrane. Its subcellular location is the melanosome. In terms of biological role, cargo receptor involved in protein vesicular trafficking and quality control in the endoplasmic reticulum (ER) and Golgi. The p24 protein family is a group of transmembrane proteins that bind coat protein complex I/COPI and coat protein complex II/COPII involved in vesicular trafficking between the membranes. Acts at the lumenal side for incorporation of secretory cargo molecules into transport vesicles and involved in vesicle coat formation at the cytoplasmic side. Mainly functions in the early secretory pathway and cycles between the ER, ER-Golgi intermediate compartment (ERGIC) and Golgi, mediating cargo transport through COPI and COPII-coated vesicles. In COPII vesicle-mediated anterograde transport, involved in the transport of GPI-anchored proteins by acting together with TMED2 as their cargo receptor; the function specifically implies SEC24C and SEC24D of the COPII vesicle coat and lipid raft-like microdomains of the ER. Recognizes GPI anchors structural remodeled in the ER by the GPI inositol-deacylase/PGAP1 and the metallophosphoesterase MPPE1/PGAP5. In COPI vesicle-mediated retrograde transport, involved in the biogenesis of COPI vesicles and vesicle coat recruitment. Involved in trafficking of amyloid beta A4 protein and soluble APP-beta release (independent from the modulation of gamma-secretase activity). Involved in the KDELR2-mediated retrograde transport of the toxin A subunit (CTX-A-K63)together with COPI and the COOH terminus of KDELR2. On Golgi membranes, acts as a primary receptor for ARF1-GDP, a GTP-binding protein involved in COPI-vesicle formation. Increases coatomer-dependent GTPase-activating activity of ARFGAP2 which mediates the hydrolysis of ARF1-bound GTP and therefore modulates protein trafficking from the Golgi apparatus. Involved in the exocytic trafficking of G protein-coupled receptors F2LR1/PAR2 (trypsin and tryspin-like enzyme receptor), OPRM1 (opioid receptor) and P2RY4 (UTD and UDP receptor) from the Golgi to the plasma membrane, thus contributing to receptor resensitization. In addition to its cargo receptor activity, may also act as a protein channel after oligomerization, facilitating the post-translational entry of leaderless cytoplasmic cargo into the ERGIC. Involved in the translocation into ERGIC, the vesicle entry and the secretion of leaderless cargos (lacking the secretion signal sequence), including the mature form of interleukin 1/IL-1 family members, the alpha-crystallin B chain HSPB5, the carbohydrate-binding proteins galectin-1/LGALS1 and galectin-3/LGALS3, the microtubule-associated protein Tau/MAPT, and the annexin A1/ANXA1; the translocation process is dependent on cargo protein unfolding and enhanced by chaperones HSP90AB1 and HSP90B1/GRP9. Could also associates with the presenilin-dependent gamma-secretase complex in order to regulate gamma-cleavages of the amyloid beta A4 protein to yield amyloid-beta 40/Abeta40. This is Transmembrane emp24 domain-containing protein 10 from Homo sapiens (Human).